We begin with the raw amino-acid sequence, 552 residues long: Phosphoglucomutase (552 aa).

Serine 143 acts as the Phosphoserine intermediate in catalysis. Positions 143, 295, 297, and 299 each coordinate Mg(2+).

Belongs to the phosphohexose mutase family. Mg(2+) is required as a cofactor.

It carries out the reaction alpha-D-glucose 1-phosphate = alpha-D-glucose 6-phosphate. The protein operates within glycolipid metabolism; diglucosyl-diacylglycerol biosynthesis. Catalyzes the interconversion between glucose-6-phosphate and alpha-glucose-1-phosphate. This is the first step in the biosynthesis of diglucosyl-diacylglycerol (Glc2-DAG), i.e. the predominant glycolipid found in the S.aureus membrane, which is also used as a membrane anchor for lipoteichoic acid (LTA). The polypeptide is Phosphoglucomutase (pgcA) (Staphylococcus aureus (strain MRSA252)).